Here is a 266-residue protein sequence, read N- to C-terminus: Pyridoxal phosphate phosphatase YigL (266 aa).

Residue D8 is the Nucleophile of the active site. Residue D8 participates in Mg(2+) binding. Residue L9 coordinates phosphate. D10 lines the Mg(2+) pocket. Phosphate contacts are provided by residues 42 to 43 (TG) and K191. D214 provides a ligand contact to Mg(2+). Position 217 (N217) interacts with phosphate.

The protein belongs to the HAD-like hydrolase superfamily. Cof family. Mg(2+) serves as cofactor. Requires Mn(2+) as cofactor. Co(2+) is required as a cofactor. The cofactor is Zn(2+).

The enzyme catalyses pyridoxal 5'-phosphate + H2O = pyridoxal + phosphate. It catalyses the reaction sugar phosphate + H2O = sugar + phosphate.. Its function is as follows. Catalyzes Strongly the dephosphorylation of pyridoxal-phosphate (PLP) and moderately the dephosphorylation of 2-deoxyglucose 6-phosphate (2bGLU6P) and beta-glucose 6-phosphate (bGlu6P). Also hydrolyzes both purines (GMP and IMP) and pyrimidines as secondary substrates. This is Pyridoxal phosphate phosphatase YigL (yigL) from Escherichia coli (strain K12).